Reading from the N-terminus, the 472-residue chain is Chromosomal replication initiator protein DnaA (472 aa).

The domain I, interacts with DnaA modulators stretch occupies residues 1–80 (MDTKQIWFTT…YQVNVRVIIS (80 aa)). The interval 80 to 130 (SSATPAPSEPVAVTPSEPSPTTEVAEPSFASFNQAAPMLNQLPLGDPNRSS) is domain II. A domain III, AAA+ region region spans residues 131–347 (VLNPRYTFSS…GCLNRVIAYA (217 aa)). Residues glycine 175, glycine 177, lysine 178, and threonine 179 each contribute to the ATP site. A domain IV, binds dsDNA region spans residues 348-472 (NLNRTPVTVE…RQRLYGENAR (125 aa)).

Belongs to the DnaA family. In terms of assembly, oligomerizes as a right-handed, spiral filament on DNA at oriC.

Its subcellular location is the cytoplasm. In terms of biological role, plays an essential role in the initiation and regulation of chromosomal replication. ATP-DnaA binds to the origin of replication (oriC) to initiate formation of the DNA replication initiation complex once per cell cycle. Binds the DnaA box (a 9 base pair repeat at the origin) and separates the double-stranded (ds)DNA. Forms a right-handed helical filament on oriC DNA; dsDNA binds to the exterior of the filament while single-stranded (ss)DNA is stabiized in the filament's interior. The ATP-DnaA-oriC complex binds and stabilizes one strand of the AT-rich DNA unwinding element (DUE), permitting loading of DNA polymerase. After initiation quickly degrades to an ADP-DnaA complex that is not apt for DNA replication. Binds acidic phospholipids. The chain is Chromosomal replication initiator protein DnaA from Herpetosiphon aurantiacus (strain ATCC 23779 / DSM 785 / 114-95).